The primary structure comprises 566 residues: MGAKSKSSSTRFFMFYLILISLSFLGLLLNFKPLFLLNPMIASPSIVEIRYSLPEPVKRTPIWLRLIRNYLPDEKKIRVGLLNIAENERESYEASGTSILENVHVSLDPLPNNLTWTSLFPVWIDEDHTWHIPSCPEVPLPKMEGSEADVDVVVVKVPCDGFSEKRGLRDVFRLQVNLAAANLVVESGRRNVDRTVYVVFIGSCGPMHEIFRCDERVKRVGDYWVYRPDLTRLKQKLLMPPGSCQIAPLGQGEAWIQDKNRNLTSEKTTLSSFTAQRVAYVTLLHSSEVYVCGAIALAQSIRQSGSTKDMILLHDDSITNISLIGLSLAGWKLRRVERIRSPFSKKRSYNEWNYSKLRVWQVTDYDKLVFIDADFIIVKNIDYLFSYPQLSAAGNNKVLFNSGVMVLEPSACLFEDLMLKSFKIGSYNGGDQGFLNEYFVWWHRLSKRLNTMKYFGDESRHDKARNLPENLEGIHYLGLKPWRCYRDYDCNWDLKTRRVYASESVHARWWKVYDKMPKKLKGYCGLNLKMEKNVEKWRKMAKLNGFPENHWKIRIKDPRKKNRLSQ.

The helical; Signal-anchor for type II membrane protein transmembrane segment at 17–37 (LILISLSFLGLLLNFKPLFLL) threads the bilayer. Residues D372 and D374 each contribute to the Mn(2+) site. Substrate-binding positions include 372–374 (DAD), 401–403 (NSG), 428–432 (NGGDQ), and 475–480 (HYLGLK). Residue H475 coordinates Mn(2+).

It belongs to the glycosyltransferase 8 family. Glycogenin subfamily. Mn(2+) serves as cofactor.

It is found in the golgi apparatus membrane. Its function is as follows. May be involved in the substitutions of the xylan backbone in stem glucuronoxylan. This Arabidopsis thaliana (Mouse-ear cress) protein is Putative UDP-glucuronate:xylan alpha-glucuronosyltransferase 5 (GUX5).